The primary structure comprises 425 residues: Serine hydroxymethyltransferase (425 aa).

(6S)-5,6,7,8-tetrahydrofolate is bound by residues L123 and 127 to 129; that span reads GHL. K232 is modified (N6-(pyridoxal phosphate)lysine). E248 contacts (6S)-5,6,7,8-tetrahydrofolate.

The protein belongs to the SHMT family. Homodimer. Pyridoxal 5'-phosphate is required as a cofactor.

The protein localises to the cytoplasm. The enzyme catalyses (6R)-5,10-methylene-5,6,7,8-tetrahydrofolate + glycine + H2O = (6S)-5,6,7,8-tetrahydrofolate + L-serine. It functions in the pathway one-carbon metabolism; tetrahydrofolate interconversion. Its pathway is amino-acid biosynthesis; glycine biosynthesis; glycine from L-serine: step 1/1. Its function is as follows. Catalyzes the reversible interconversion of serine and glycine with tetrahydrofolate (THF) serving as the one-carbon carrier. This reaction serves as the major source of one-carbon groups required for the biosynthesis of purines, thymidylate, methionine, and other important biomolecules. Also exhibits THF-independent aldolase activity toward beta-hydroxyamino acids, producing glycine and aldehydes, via a retro-aldol mechanism. In Anaplasma phagocytophilum (strain HZ), this protein is Serine hydroxymethyltransferase.